Reading from the N-terminus, the 196-residue chain is Thymidine kinase (196 aa).

17-24 is an ATP binding site; the sequence is GPMFAGKT. The active-site Proton acceptor is the glutamate 92. Phenylalanine 121 is a binding site for substrate. Zn(2+) is bound by residues cysteine 146 and cysteine 149. Position 166-170 (166-170) interacts with substrate; the sequence is LILAG. Residues cysteine 179 and cysteine 182 each contribute to the Zn(2+) site.

Belongs to the thymidine kinase family.

The enzyme catalyses thymidine + ATP = dTMP + ADP + H(+). Its function is as follows. Phosphorylates thymidine. ASFV replicates in the cytoplasm of infected cells and contains genes encoding a number of enzymes needed for DNA synthesis, including thymidine kinase. Important for growth in swine macrophages in vitro and is a virus virulence factor in swine. This chain is Thymidine kinase, found in African swine fever virus (strain Badajoz 1971 Vero-adapted) (Ba71V).